A 516-amino-acid polypeptide reads, in one-letter code: Multicopper oxidase CueO (516 aa).

The tat-type signal signal peptide spans Met1–Ala28. 3 Plastocyanin-like domains span residues Gly55–Asp165, Pro227–Pro292, and Gly399–Val516. Positions 101, 103, 141, and 143 each coordinate Cu cation. Residues His443, His446, His448, His499, Cys500, His501, and His505 each contribute to the Cu cation site.

The protein belongs to the multicopper oxidase family. Monomer. Cu cation is required as a cofactor. Predicted to be exported by the Tat system. The position of the signal peptide cleavage has not been experimentally proven.

Its subcellular location is the periplasm. The catalysed reaction is 4 Cu(+) + O2 + 4 H(+) = 4 Cu(2+) + 2 H2O. Its function is as follows. Multicopper oxidase involved in copper homeostasis and copper tolerance under aerobic conditions. Is responsible for the oxidation of Cu(+) to the less harmful Cu(2+) in the periplasm, thereby preventing Cu(+) from entering the cytoplasm. This chain is Multicopper oxidase CueO (cueO), found in Escherichia coli O157:H7.